The following is a 234-amino-acid chain: Phosphoribosylaminoimidazole-succinocarboxamide synthase (234 aa).

It belongs to the SAICAR synthetase family.

The catalysed reaction is 5-amino-1-(5-phospho-D-ribosyl)imidazole-4-carboxylate + L-aspartate + ATP = (2S)-2-[5-amino-1-(5-phospho-beta-D-ribosyl)imidazole-4-carboxamido]succinate + ADP + phosphate + 2 H(+). It participates in purine metabolism; IMP biosynthesis via de novo pathway; 5-amino-1-(5-phospho-D-ribosyl)imidazole-4-carboxamide from 5-amino-1-(5-phospho-D-ribosyl)imidazole-4-carboxylate: step 1/2. In Pyrococcus furiosus (strain ATCC 43587 / DSM 3638 / JCM 8422 / Vc1), this protein is Phosphoribosylaminoimidazole-succinocarboxamide synthase.